Consider the following 177-residue polypeptide: Cyclic pyranopterin monophosphate synthase (177 aa).

Substrate-binding positions include 89–91 (LCH) and 125–126 (ME). Residue D140 is part of the active site.

This sequence belongs to the MoaC family. Homohexamer; trimer of dimers.

It carries out the reaction (8S)-3',8-cyclo-7,8-dihydroguanosine 5'-triphosphate = cyclic pyranopterin phosphate + diphosphate. The protein operates within cofactor biosynthesis; molybdopterin biosynthesis. Catalyzes the conversion of (8S)-3',8-cyclo-7,8-dihydroguanosine 5'-triphosphate to cyclic pyranopterin monophosphate (cPMP). The polypeptide is Cyclic pyranopterin monophosphate synthase (Streptomyces griseus subsp. griseus (strain JCM 4626 / CBS 651.72 / NBRC 13350 / KCC S-0626 / ISP 5235)).